The following is a 175-amino-acid chain: Methylated-DNA--protein-cysteine methyltransferase (175 aa).

Cysteine 142 (nucleophile; methyl group acceptor) is an active-site residue.

The protein belongs to the MGMT family.

It is found in the cytoplasm. It carries out the reaction a 6-O-methyl-2'-deoxyguanosine in DNA + L-cysteinyl-[protein] = S-methyl-L-cysteinyl-[protein] + a 2'-deoxyguanosine in DNA. The enzyme catalyses a 4-O-methyl-thymidine in DNA + L-cysteinyl-[protein] = a thymidine in DNA + S-methyl-L-cysteinyl-[protein]. Its function is as follows. Involved in the cellular defense against the biological effects of O6-methylguanine (O6-MeG) and O4-methylthymine (O4-MeT) in DNA. Repairs the methylated nucleobase in DNA by stoichiometrically transferring the methyl group to a cysteine residue in the enzyme. This is a suicide reaction: the enzyme is irreversibly inactivated. The chain is Methylated-DNA--protein-cysteine methyltransferase from Thermococcus barophilus (strain DSM 11836 / MP).